A 420-amino-acid chain; its full sequence is Sodium/proton antiporter 2 (420 aa).

The next 11 membrane-spanning stretches (helical) occupy residues I25–I45, I60–F80, I94–T114, L136–V156, I173–L193, L221–G241, L242–I262, G285–L305, L321–A341, F363–M383, and F400–L420.

This sequence belongs to the NhaD Na(+)/H(+) (TC 2.A.62) antiporter family.

It localises to the membrane. Functionally, na(+)/H(+) antiporter that extrudes sodium in exchange for external protons. In Arabidopsis thaliana (Mouse-ear cress), this protein is Sodium/proton antiporter 2.